Reading from the N-terminus, the 274-residue chain is 2,3,4,5-tetrahydropyridine-2,6-dicarboxylate N-succinyltransferase (274 aa).

Substrate is bound by residues Arg-104 and Asp-141.

Belongs to the transferase hexapeptide repeat family. Homotrimer.

The protein resides in the cytoplasm. It carries out the reaction (S)-2,3,4,5-tetrahydrodipicolinate + succinyl-CoA + H2O = (S)-2-succinylamino-6-oxoheptanedioate + CoA. The protein operates within amino-acid biosynthesis; L-lysine biosynthesis via DAP pathway; LL-2,6-diaminopimelate from (S)-tetrahydrodipicolinate (succinylase route): step 1/3. This is 2,3,4,5-tetrahydropyridine-2,6-dicarboxylate N-succinyltransferase from Shewanella oneidensis (strain ATCC 700550 / JCM 31522 / CIP 106686 / LMG 19005 / NCIMB 14063 / MR-1).